Reading from the N-terminus, the 109-residue chain is Fluoride-specific ion channel FluC 1 (109 aa).

The next 4 membrane-spanning stretches (helical) occupy residues 1 to 21, 29 to 49, 55 to 75, and 87 to 107; these read MVIV…YFFS, LPLG…VFYN, EVYA…STLN, and VFYS…FLGI. Positions 66 and 69 each coordinate Na(+).

This sequence belongs to the fluoride channel Fluc/FEX (TC 1.A.43) family.

The protein resides in the cell membrane. The catalysed reaction is fluoride(in) = fluoride(out). Its activity is regulated as follows. Na(+) is not transported, but it plays an essential structural role and its presence is essential for fluoride channel function. In terms of biological role, fluoride-specific ion channel. Important for reducing fluoride concentration in the cell, thus reducing its toxicity. In Streptococcus pneumoniae (strain ATCC BAA-255 / R6), this protein is Fluoride-specific ion channel FluC 1.